We begin with the raw amino-acid sequence, 102 residues long: Small ribosomal subunit protein uS10 (102 aa).

Positions 34–59 (QMSGPIPLPTKRLLVPTRKSPDGEGK) are disordered.

Belongs to the universal ribosomal protein uS10 family. As to quaternary structure, part of the 30S ribosomal subunit.

In terms of biological role, involved in the binding of tRNA to the ribosomes. The sequence is that of Small ribosomal subunit protein uS10 from Methanopyrus kandleri (strain AV19 / DSM 6324 / JCM 9639 / NBRC 100938).